Here is a 147-residue protein sequence, read N- to C-terminus: 3-dehydroquinate dehydratase 2 (147 aa).

Catalysis depends on Y23, which acts as the Proton acceptor. Residues N74, H80, and D87 each contribute to the substrate site. The active-site Proton donor is H100. Substrate contacts are provided by residues 101–102 (IS) and R111.

Belongs to the type-II 3-dehydroquinase family. As to quaternary structure, homododecamer.

The catalysed reaction is 3-dehydroquinate = 3-dehydroshikimate + H2O. It functions in the pathway metabolic intermediate biosynthesis; chorismate biosynthesis; chorismate from D-erythrose 4-phosphate and phosphoenolpyruvate: step 3/7. Functionally, catalyzes a trans-dehydration via an enolate intermediate. This chain is 3-dehydroquinate dehydratase 2 (aroQ2), found in Agrobacterium fabrum (strain C58 / ATCC 33970) (Agrobacterium tumefaciens (strain C58)).